Consider the following 689-residue polypeptide: Glycine--tRNA ligase beta subunit (689 aa).

This sequence belongs to the class-II aminoacyl-tRNA synthetase family. As to quaternary structure, tetramer of two alpha and two beta subunits.

It is found in the cytoplasm. The catalysed reaction is tRNA(Gly) + glycine + ATP = glycyl-tRNA(Gly) + AMP + diphosphate. This Salmonella typhi protein is Glycine--tRNA ligase beta subunit.